The chain runs to 662 residues: DCC-interacting protein 13-beta (662 aa).

The 266-residue stretch at Ala3 to Val268 folds into the BAR domain. A PH domain is found at Leu277 to Arg375. Residues Ser486 to Asp635 enclose the PID domain. Residues Asp643–Ala662 are disordered. Positions Ser653–Ala662 are enriched in basic and acidic residues.

Homodimer. Homotetramer. Binds RAB5A/Rab5 through an N-terminal domain. This interaction is essential for its recruitment to endosomal membranes as well as its role in cell proliferation. Binds subunits of the NuRD/MeCP1 complex. Interacts with FSHR; interaction is independent of follicle stimulating hormone stimulation. Interacts with APPL1; the interaction is decreased by adiponectin in a time-dependent manner. Forms a complex comprising APPL1, RUVBL2, CTNNB1, HDAC1 and HDAC2; interaction reduces interaction between CTNNB1, HDAC1, HDAC2 and RUVBL2 leading to the decrease of deacetylase activity of this complex; affects the recruitment of repressive complexes to the Wnt target genes. Interacts (via BAR domain) with TBC1D1; interaction is dependent of TBC1D1 phosphorylation at 'Ser-235'; interaction diminishes the phosphorylation of TBC1D1 at 'Thr-596', resulting in inhibition of SLC2A4 translocation and glucose uptake. Interacts with ANXA2; targets APPL2 to endosomes and acting in parallel to RAB5A. Interacts with RAB31 (in GTP-bound form); interaction contributes to or enhances recruitment of APPL2 to the phagosomes; interaction enhances Fc-gamma receptor-mediated phagocytosis through PI3K/Akt signaling in macrophages. Interacts with PIK3R1; forms a complex with PIK3R1 and APPL1. Interacts (via BAR domain) with ADIPOR1; hinders the accessibility of APPL1 to ADIPOR1; negatively regulates adiponectin signaling; ADIPOQ dissociates this interaction and facilitates the recruitment of APPL1 to ADIPOR1. Interacts (via BAR domain) with ADIPOR2; ADIPOQ dissociates this interaction.

The protein resides in the early endosome membrane. It localises to the nucleus. Its subcellular location is the cell membrane. The protein localises to the endosome membrane. It is found in the cytoplasm. The protein resides in the cytoplasmic vesicle. It localises to the phagosome. Its subcellular location is the cell projection. The protein localises to the ruffle. It is found in the ruffle membrane. The protein resides in the phagosome membrane. Multifunctional adapter protein that binds to various membrane receptors, nuclear factors and signaling proteins to regulate many processes, such as cell proliferation, immune response, endosomal trafficking and cell metabolism. Regulates signaling pathway leading to cell proliferation through interaction with RAB5A and subunits of the NuRD/MeCP1 complex. Plays a role in immune response by modulating phagocytosis, inflammatory and innate immune responses. In macrophages, enhances Fc-gamma receptor-mediated phagocytosis through interaction with RAB31 leading to activation of PI3K/Akt signaling. In response to LPS, modulates inflammatory responses by playing a key role on the regulation of TLR4 signaling and in the nuclear translocation of RELA/NF-kappa-B p65 and the secretion of pro- and anti-inflammatory cytokines. Also functions as a negative regulator of innate immune response via inhibition of AKT1 signaling pathway by forming a complex with APPL1 and PIK3R1. Plays a role in endosomal trafficking of TGFBR1 from the endosomes to the nucleus. Plays a role in cell metabolism by regulating adiponecting ans insulin signaling pathways and adaptative thermogenesis. In muscle, negatively regulates adiponectin-simulated glucose uptake and fatty acid oyidation by inhibiting adiponectin signaling pathway through APPL1 sequestration thereby antagonizing APPL1 action. In muscles, negatively regulates insulin-induced plasma membrane recruitment of GLUT4 and glucose uptake through interaction with TBC1D1. Plays a role in cold and diet-induced adaptive thermogenesis by activating ventromedial hypothalamus (VMH) neurons throught AMPK inhibition which enhances sympathetic outflow to subcutaneous white adipose tissue (sWAT), sWAT beiging and cold tolerance. Also plays a role in other signaling pathways namely Wnt/beta-catenin, HGF and glucocorticoid receptor signaling. Positive regulator of beta-catenin/TCF-dependent transcription through direct interaction with RUVBL2/reptin resulting in the relief of RUVBL2-mediated repression of beta-catenin/TCF target genes by modulating the interactions within the beta-catenin-reptin-HDAC complex. May affect adult neurogenesis in hippocampus and olfactory system via regulating the sensitivity of glucocorticoid receptor. Required for fibroblast migration through HGF cell signaling. The polypeptide is DCC-interacting protein 13-beta (Rattus norvegicus (Rat)).